Here is a 625-residue protein sequence, read N- to C-terminus: Tumor necrosis factor receptor superfamily member 11A (625 aa).

The first 30 residues, 1 to 30, serve as a signal peptide directing secretion; sequence MAPRARRRRQLPAPLLALCVLLVPLQVTLQ. Residues 31 to 214 lie on the Extracellular side of the membrane; the sequence is VTPPCTQERH…PKEAQAYLPS (184 aa). Disulfide bonds link Cys-35–Cys-47, Cys-48–Cys-61, Cys-51–Cys-69, Cys-72–Cys-87, Cys-93–Cys-113, Cys-115–Cys-128, Cys-125–Cys-127, Cys-134–Cys-152, and Cys-155–Cys-170. TNFR-Cys repeat units lie at residues 35–69, 72–113, 115–152, and 155–195; these read CTQE…DSVC, CGPD…PRRC, CTAG…DTVC, and CLLG…DVVC. N-linked (GlcNAc...) asparagine glycosylation is present at Asn-106. Na(+) is bound by residues Cys-134, Ala-135, Phe-138, Ser-161, and Val-163. Asn-175 carries N-linked (GlcNAc...) asparagine glycosylation. Residues Cys-176 and Cys-195 are joined by a disulfide bond. The helical transmembrane segment at 215–234 threads the bilayer; it reads LIVLLLFISVVVVAAIIFGV. Topologically, residues 235 to 625 are cytoplasmic; sequence YYRKGGKALT…HTQGSGQCAE (391 aa). Disordered regions lie at residues 331-356, 388-413, and 479-524; these read TQGD…STGS, GTES…MPVS, and SMAE…FISS. Residues 499 to 511 show a composition bias toward low complexity; that stretch reads SGSSPSDQPPASG. Residues 512–524 show a composition bias toward polar residues; the sequence is NVTGNSNSTFISS. The interval 532-537 is required for interaction with EEIG1 and osteoclast differentiation; it reads GDIIVV. The disordered stretch occupies residues 542–625; sequence TSQEGPGSAE…HTQGSGQCAE (84 aa). Over residues 543-558 the composition is skewed to low complexity; the sequence is SQEGPGSAEPESEPVG. Positions 561 to 571 are enriched in basic and acidic residues; that stretch reads VQEETLAHRDS. A Phosphoserine modification is found at Ser-571. Residues 603–625 show a composition bias toward polar residues; the sequence is RPVQEQGGAQTSLHTQGSGQCAE.

In terms of assembly, binds to the clefts between the subunits of the TNFSF11 ligand trimer to form a heterohexamer. Part of a complex composed of EEIG1, TNFRSF11A/RANK, PLCG2, GAB2, TEC and BTK; complex formation increases in the presence of TNFSF11/RANKL. Interacts with TRAF1, TRAF2, TRAF3, TRAF5 and TRAF6. Interacts (via cytoplasmic domain) with GAB2. Interacts (via cytoplasmic domain); with EEIG1 (via N-terminus); when in the presence of TNFSF11/RANKL. As to expression, ubiquitous expression with high levels in trabecular bone, thymus, small intestine, lung, brain and kidney. Weakly expressed in spleen and bone marrow.

The protein localises to the cell membrane. Its subcellular location is the membrane raft. Its function is as follows. Receptor for TNFSF11/RANKL/TRANCE/OPGL; essential for RANKL-mediated osteoclastogenesis. Its interaction with EEIG1 promotes osteoclastogenesis via facilitating the transcription of NFATC1 and activation of PLCG2. Involved in the regulation of interactions between T-cells and dendritic cells. This chain is Tumor necrosis factor receptor superfamily member 11A (Tnfrsf11a), found in Mus musculus (Mouse).